A 458-amino-acid polypeptide reads, in one-letter code: Lysine-rich nucleolar protein 1 (458 aa).

Over residues 1–14 (MITKTHKVDLGLPE) the composition is skewed to basic and acidic residues. The tract at residues 1-21 (MITKTHKVDLGLPEKKKKKKV) is disordered. A Glycyl lysine isopeptide (Lys-Gly) (interchain with G-Cter in SUMO2) cross-link involves residue Lys7. Residues Ser42 and Ser50 each carry the phosphoserine modification. The disordered stretch occupies residues 46 to 305 (ATSPSKSVAH…ESGVAGDPWK (260 aa)). Residues 64-73 (VKKKKKKKKG) are compositionally biased toward basic residues. Lys101 is covalently cross-linked (Glycyl lysine isopeptide (Lys-Gly) (interchain with G-Cter in SUMO2)). Phosphoserine is present on Ser111. Lys130 is covalently cross-linked (Glycyl lysine isopeptide (Lys-Gly) (interchain with G-Cter in SUMO2)). Ser132 is subject to Phosphoserine. The span at 145-155 (GKKLKKHKKEK) shows a compositional bias: basic residues. The segment covering 173–192 (EAREARDVGDTCSVGKKDEE) has biased composition (basic and acidic residues). Basic residues predominate over residues 198 to 218 (QKRKRKSPREHNGKVKKKKKI). Residue Lys249 forms a Glycyl lysine isopeptide (Lys-Gly) (interchain with G-Cter in SUMO1); alternate linkage. Lys249 is covalently cross-linked (Glycyl lysine isopeptide (Lys-Gly) (interchain with G-Cter in SUMO2); alternate). At Ser265 the chain carries Phosphoserine. The span at 265–274 (SAKKKMKSKK) shows a compositional bias: basic residues. Residues Lys275, Lys287, and Lys305 each participate in a glycyl lysine isopeptide (Lys-Gly) (interchain with G-Cter in SUMO2) cross-link. Residues 306–458 (EETDTDLEVV…NASKSVKLED (153 aa)) form an interaction with ZNF106 region. Thr308 and Thr310 each carry phosphothreonine. Glycyl lysine isopeptide (Lys-Gly) (interchain with G-Cter in SUMO2) cross-links involve residues Lys319, Lys353, Lys373, Lys375, and Lys407. Basic and acidic residues predominate over residues 336–353 (QEEIDRESGKTEASETRK). Residues 336–355 (QEEIDRESGKTEASETRKWT) form a disordered region. Arg430 carries the post-translational modification Omega-N-methylarginine. Lys442 is covalently cross-linked (Glycyl lysine isopeptide (Lys-Gly) (interchain with G-Cter in SUMO2)).

In terms of assembly, interacts with ZNF106.

The protein resides in the nucleus. It localises to the nucleolus. The polypeptide is Lysine-rich nucleolar protein 1 (KNOP1) (Homo sapiens (Human)).